Consider the following 353-residue polypeptide: Uroporphyrinogen decarboxylase (353 aa).

Substrate contacts are provided by residues 26-30 (RQAGR), Asp75, Tyr161, Ser216, and His332.

The protein belongs to the uroporphyrinogen decarboxylase family. As to quaternary structure, homodimer.

The protein localises to the cytoplasm. It carries out the reaction uroporphyrinogen III + 4 H(+) = coproporphyrinogen III + 4 CO2. It functions in the pathway porphyrin-containing compound metabolism; protoporphyrin-IX biosynthesis; coproporphyrinogen-III from 5-aminolevulinate: step 4/4. Functionally, catalyzes the decarboxylation of four acetate groups of uroporphyrinogen-III to yield coproporphyrinogen-III. The protein is Uroporphyrinogen decarboxylase of Gluconacetobacter diazotrophicus (strain ATCC 49037 / DSM 5601 / CCUG 37298 / CIP 103539 / LMG 7603 / PAl5).